Reading from the N-terminus, the 418-residue chain is Glutamyl-tRNA reductase (418 aa).

Substrate is bound by residues 49-52 (TCNR), serine 109, 114-116 (EPQ), and glutamine 120. Residue cysteine 50 is the Nucleophile of the active site. 189–194 (GAGETI) serves as a coordination point for NADP(+).

The protein belongs to the glutamyl-tRNA reductase family. As to quaternary structure, homodimer.

It carries out the reaction (S)-4-amino-5-oxopentanoate + tRNA(Glu) + NADP(+) = L-glutamyl-tRNA(Glu) + NADPH + H(+). The protein operates within porphyrin-containing compound metabolism; protoporphyrin-IX biosynthesis; 5-aminolevulinate from L-glutamyl-tRNA(Glu): step 1/2. Its function is as follows. Catalyzes the NADPH-dependent reduction of glutamyl-tRNA(Glu) to glutamate 1-semialdehyde (GSA). This is Glutamyl-tRNA reductase from Erwinia tasmaniensis (strain DSM 17950 / CFBP 7177 / CIP 109463 / NCPPB 4357 / Et1/99).